We begin with the raw amino-acid sequence, 242 residues long: Biosynthetic peptidoglycan transglycosylase (242 aa).

The helical transmembrane segment at 19–39 threads the bilayer; it reads ILAALAVFWGGGIALFSVVPV.

It belongs to the glycosyltransferase 51 family.

It is found in the cell inner membrane. The enzyme catalyses [GlcNAc-(1-&gt;4)-Mur2Ac(oyl-L-Ala-gamma-D-Glu-L-Lys-D-Ala-D-Ala)](n)-di-trans,octa-cis-undecaprenyl diphosphate + beta-D-GlcNAc-(1-&gt;4)-Mur2Ac(oyl-L-Ala-gamma-D-Glu-L-Lys-D-Ala-D-Ala)-di-trans,octa-cis-undecaprenyl diphosphate = [GlcNAc-(1-&gt;4)-Mur2Ac(oyl-L-Ala-gamma-D-Glu-L-Lys-D-Ala-D-Ala)](n+1)-di-trans,octa-cis-undecaprenyl diphosphate + di-trans,octa-cis-undecaprenyl diphosphate + H(+). It participates in cell wall biogenesis; peptidoglycan biosynthesis. Its function is as follows. Peptidoglycan polymerase that catalyzes glycan chain elongation from lipid-linked precursors. In Salmonella agona (strain SL483), this protein is Biosynthetic peptidoglycan transglycosylase.